We begin with the raw amino-acid sequence, 230 residues long: Ribosomal RNA small subunit methyltransferase G (230 aa).

S-adenosyl-L-methionine-binding positions include Gly93, Leu98, 144 to 145 (IE), and Arg158.

It belongs to the methyltransferase superfamily. RNA methyltransferase RsmG family.

The protein resides in the cytoplasm. The enzyme catalyses guanosine(527) in 16S rRNA + S-adenosyl-L-methionine = N(7)-methylguanosine(527) in 16S rRNA + S-adenosyl-L-homocysteine. Specifically methylates the N7 position of guanine in position 527 of 16S rRNA. The chain is Ribosomal RNA small subunit methyltransferase G from Bordetella parapertussis (strain 12822 / ATCC BAA-587 / NCTC 13253).